A 1082-amino-acid chain; its full sequence is Integrator complex subunit 3 homolog (1082 aa).

3 disordered regions span residues 483-563, 923-945, and 1005-1082; these read PGPP…VSDD, YPSN…TAPT, and DETS…SDSD. 2 stretches are compositionally biased toward low complexity: residues 517-528 and 542-555; these read PAAKAASTAASA and TKPA…TTTT. Residues 936–945 are compositionally biased toward polar residues; it reads KSAQQNTAPT. Low complexity-rich tracts occupy residues 1008-1018 and 1033-1056; these read STTVGRRGTSS and EKAA…ASAK.

Belongs to the Integrator subunit 3 family. As to quaternary structure, belongs to the multiprotein complex Integrator. The core complex associates with protein phosphatase 2A subunits, to form the Integrator-PP2A (INTAC) complex.

Its subcellular location is the nucleus. The protein localises to the cytoplasm. In terms of biological role, component of the integrator complex, a multiprotein complex that terminates RNA polymerase II (Pol II) transcription in the promoter-proximal region of genes. The integrator complex provides a quality checkpoint during transcription elongation by driving premature transcription termination of transcripts that are unfavorably configured for transcriptional elongation: the complex terminates transcription by (1) catalyzing dephosphorylation of the C-terminal domain (CTD) of Pol II subunit Polr2A/Rbp1 and Spt5, and (2) degrading the exiting nascent RNA transcript via endonuclease activity. The integrator complex is also involved in the 3'-end processing of the U7 snRNA, and also the spliceosomal snRNAs U1, U2, U4 and U5. This Anopheles gambiae (African malaria mosquito) protein is Integrator complex subunit 3 homolog.